A 650-amino-acid polypeptide reads, in one-letter code: Acetyl-coenzyme A synthetase (650 aa).

CoA is bound by residues 191-194 (RGGR), T311, and N335. ATP-binding positions include 387 to 389 (GEP), 411 to 416 (DTWWQT), D500, and R515. CoA is bound at residue S523. ATP is bound at residue R526. Mg(2+) contacts are provided by V537, H539, and V542. Residue R584 coordinates CoA. Position 609 is an N6-acetyllysine (K609).

It belongs to the ATP-dependent AMP-binding enzyme family. Mg(2+) is required as a cofactor. Post-translationally, acetylated. Deacetylation by the SIR2-homolog deacetylase activates the enzyme.

It catalyses the reaction acetate + ATP + CoA = acetyl-CoA + AMP + diphosphate. In terms of biological role, catalyzes the conversion of acetate into acetyl-CoA (AcCoA), an essential intermediate at the junction of anabolic and catabolic pathways. AcsA undergoes a two-step reaction. In the first half reaction, AcsA combines acetate with ATP to form acetyl-adenylate (AcAMP) intermediate. In the second half reaction, it can then transfer the acetyl group from AcAMP to the sulfhydryl group of CoA, forming the product AcCoA. This is Acetyl-coenzyme A synthetase from Shewanella oneidensis (strain ATCC 700550 / JCM 31522 / CIP 106686 / LMG 19005 / NCIMB 14063 / MR-1).